A 358-amino-acid chain; its full sequence is Ion-translocating oxidoreductase complex subunit D (358 aa).

4 helical membrane-spanning segments follow: residues 19 to 39, 41 to 61, 79 to 99, and 125 to 145; these read IMLWVILAMMPAFFTQIYYFG, GVVLQSALAIGTAIIAEFIAI, LTALILAMAIPPYAPYWIIII, and IGYVILLISFPLQMTTWMPPI. FMN phosphoryl threonine is present on Thr186. 5 helical membrane-spanning segments follow: residues 220–240, 248–268, 271–291, 297–317, and 321–341; these read FAQGWWQINVAFLAGGIFLIL, IPVAMLVTFFCLATATAFTGF, LSAISQLVSGAMMFGAFFIAT, SITPRGKIIFGALVGLFVYLI, and GNYPDGVAFAILLSNICVPLI.

It belongs to the NqrB/RnfD family. The complex is composed of six subunits: RnfA, RnfB, RnfC, RnfD, RnfE and RnfG. FMN is required as a cofactor.

The protein localises to the cell inner membrane. Functionally, part of a membrane-bound complex that couples electron transfer with translocation of ions across the membrane. The polypeptide is Ion-translocating oxidoreductase complex subunit D (Haemophilus influenzae (strain 86-028NP)).